A 109-amino-acid polypeptide reads, in one-letter code: Nucleoid-associated protein Swoo_1794 (109 aa).

A disordered region spans residues glutamine 88–phenylalanine 109.

The protein belongs to the YbaB/EbfC family. As to quaternary structure, homodimer.

It localises to the cytoplasm. It is found in the nucleoid. In terms of biological role, binds to DNA and alters its conformation. May be involved in regulation of gene expression, nucleoid organization and DNA protection. The sequence is that of Nucleoid-associated protein Swoo_1794 from Shewanella woodyi (strain ATCC 51908 / MS32).